A 405-amino-acid polypeptide reads, in one-letter code: Tryptophan synthase beta chain (405 aa).

Lys96 bears the N6-(pyridoxal phosphate)lysine mark.

This sequence belongs to the TrpB family. As to quaternary structure, tetramer of two alpha and two beta chains. Requires pyridoxal 5'-phosphate as cofactor.

The catalysed reaction is (1S,2R)-1-C-(indol-3-yl)glycerol 3-phosphate + L-serine = D-glyceraldehyde 3-phosphate + L-tryptophan + H2O. Its pathway is amino-acid biosynthesis; L-tryptophan biosynthesis; L-tryptophan from chorismate: step 5/5. Its function is as follows. The beta subunit is responsible for the synthesis of L-tryptophan from indole and L-serine. The polypeptide is Tryptophan synthase beta chain (Clostridium botulinum (strain Eklund 17B / Type B)).